The primary structure comprises 404 residues: G-protein coupled receptor 182 (404 aa).

The Extracellular segment spans residues 1–57 (MSVKPSWGPGPSEGVTAVPTSDLGEIHNWTELLDLFNHTLSECHVELSQSTKRVVLF). N-linked (GlcNAc...) asparagine glycans are attached at residues Asn-28 and Asn-37. Residues 58 to 79 (ALYLAMFVVGLVENLLVICVNW) form a helical membrane-spanning segment. Residues 80–90 (RGSGRAGLMNL) lie on the Cytoplasmic side of the membrane. Residues 91-113 (YILNMAIADLGIVLSLPVWMLEV) traverse the membrane as a helical segment. Topologically, residues 114–127 (TLDYTWLWGSFSCR) are extracellular. Cys-126 and Cys-202 are joined by a disulfide. The helical transmembrane segment at 128 to 149 (FTHYFYFVNMYSSIFFLVCLSV) threads the bilayer. The Cytoplasmic segment spans residues 150-170 (DRYVTLTSASPSWQRYQHRVR). Residues 171-193 (RAMCAGIWVLSAIIPLPEVVHIQ) form a helical membrane-spanning segment. Residues 194–217 (LVEGPEPMCLFMAPFETYSTWALA) are Extracellular-facing. The helical transmembrane segment at 218–239 (VALSTTILGFLLPFPLITVFNV) threads the bilayer. At 240-258 (LTACRLRQPGQPKSRRHCL) the chain is on the cytoplasmic side. The chain crosses the membrane as a helical span at residues 259–280 (LLCAYVAVFVMCWLPYHVTLLL). The Extracellular segment spans residues 281 to 299 (LTLHGTHISLHCHLVHLLY). A helical transmembrane segment spans residues 300–320 (FFYDVIDCFSMLHCVINPILY). The Cytoplasmic segment spans residues 321-404 (NFLSPHFRGR…ISPTQPLTPS (84 aa)).

The protein belongs to the G-protein coupled receptor 1 family. In terms of tissue distribution, highly expressed in heart, skeletal muscle, immune system, adrenal gland and liver.

It is found in the cell membrane. Functionally, orphan receptor. This chain is G-protein coupled receptor 182 (GPR182), found in Homo sapiens (Human).